Consider the following 198-residue polypeptide: Iron-sulfur flavoprotein MJ0731 (198 aa).

4 residues coordinate [4Fe-4S] cluster: cysteine 46, cysteine 49, cysteine 52, and cysteine 59.

Belongs to the SsuE family. Isf subfamily. As to quaternary structure, homodimer. The cofactor is FMN. [4Fe-4S] cluster is required as a cofactor.

Functionally, redox-active protein probably involved in electron transport. This Methanocaldococcus jannaschii (strain ATCC 43067 / DSM 2661 / JAL-1 / JCM 10045 / NBRC 100440) (Methanococcus jannaschii) protein is Iron-sulfur flavoprotein MJ0731.